The primary structure comprises 351 residues: Photosystem II D2 protein (351 aa).

The chain crosses the membrane as a helical span at residues 39–59; the sequence is TSYLSIGGWFTGTTFVTSWYT. Residue His-116 coordinates chlorophyll a. Residues 123–139 traverse the membrane as a helical segment; that stretch reads GFCLRQFEIARLVGIRP. The pheophytin a site is built by Gln-128 and Asn-141. Residues 151–164 form a helical membrane-spanning segment; the sequence is IFVSVFLMYPLGQA. His-196 serves as a coordination point for chlorophyll a. Residues 206-226 traverse the membrane as a helical segment; it reads AALLCAIHGATVQNTIFEDGD. Residues His-213 and Phe-260 each contribute to the a plastoquinone site. Fe cation is bound at residue His-213. His-267 provides a ligand contact to Fe cation. Residues 277–293 form a helical membrane-spanning segment; it reads GLWTSAIGIVGLALNLR.

Belongs to the reaction center PufL/M/PsbA/D family. As to quaternary structure, PSII is composed of 1 copy each of membrane proteins PsbA, PsbB, PsbC, PsbD, PsbE, PsbF, PsbH, PsbI, PsbJ, PsbK, PsbL, PsbM, PsbT, PsbX, PsbY, PsbZ, Psb30/Ycf12, at least 3 peripheral proteins of the oxygen-evolving complex and a large number of cofactors. It forms dimeric complexes. The cofactor is The D1/D2 heterodimer binds P680, chlorophylls that are the primary electron donor of PSII, and subsequent electron acceptors. It shares a non-heme iron and each subunit binds pheophytin, quinone, additional chlorophylls, carotenoids and lipids. There is also a Cl(-1) ion associated with D1 and D2, which is required for oxygen evolution. The PSII complex binds additional chlorophylls, carotenoids and specific lipids..

The protein resides in the plastid. It is found in the chloroplast thylakoid membrane. It catalyses the reaction 2 a plastoquinone + 4 hnu + 2 H2O = 2 a plastoquinol + O2. Functionally, photosystem II (PSII) is a light-driven water:plastoquinone oxidoreductase that uses light energy to abstract electrons from H(2)O, generating O(2) and a proton gradient subsequently used for ATP formation. It consists of a core antenna complex that captures photons, and an electron transfer chain that converts photonic excitation into a charge separation. The D1/D2 (PsbA/PsbD) reaction center heterodimer binds P680, the primary electron donor of PSII as well as several subsequent electron acceptors. D2 is needed for assembly of a stable PSII complex. This chain is Photosystem II D2 protein, found in Guillardia theta (Cryptophyte).